Consider the following 996-residue polypeptide: KK-1 biosynthesis cluster protein D (996 aa).

Disordered stretches follow at residues 307-333 (HDTD…PELD), 425-449 (EQDN…ARDL), 489-556 (AGVA…ALRA), and 571-602 (STHS…SLHS). 2 stretches are compositionally biased toward polar residues: residues 318-329 (PIRSNKLSQSKQ) and 428-439 (NQTNEEGTGEVQ). 2 stretches are compositionally biased toward basic and acidic residues: residues 440-449 (SQRDRRARDL) and 500-527 (RAAE…DKAA). Polar residues predominate over residues 572 to 590 (THSIHQRASVNTTAPTVAR).

It participates in secondary metabolite biosynthesis. Functionally, part of the gene cluster that mediates the biosynthesis of KK-1, a novel cyclic depsipeptide with 10 residues which is a promising active compound with high activity against many plant pathogens, especially Botrytis cinerea. The role of kk1D in KK-1 biosynthesis has still to be determined. The nonribosomal peptide synthetase (NRPS) kk1B catalyzes the elongation and cyclization of the decapeptide chain composed of 1 D-lactic acid residue (D-Lac), 1 pipecolic acid residue (Pip), 1 aspartic acid residue (Asp), 1 isoleucine residue (Ile), 1 glycine residue (Gly), 1 tyrosine residue (Tyr) and 4 valine residues (Val). The Asp, Ile and 3 Val residues are N-methylated by the 5 methyltransferase domains from the NRPS (found in modules 3, 5, 6, 7 and 9), whereas the Tyr residue is O-methylated by the cluster encoded O-methyltransferase kk1A. The thioesterase kk1J is likely to be involved in the corrective mechanism of peptide chain synthesis. The D-lactate dehydrogenase kk1H is involved in the synthesis of D-lactic acid from pyruvic acid, which is recognized by the A domain of the first kk1B module. The pyrroline-5-carboxylate reductase kk1I is involved in the synthesis of the L-pipecolic acid residue of KK-1 from delta-1-pyrroline-5-carboxylate (P5C), a metabolic intermediate of lysine. It is still unclear how kk1C and kk1D are involved in the production of KK-1. This Curvularia clavata protein is KK-1 biosynthesis cluster protein D.